A 40-amino-acid polypeptide reads, in one-letter code: Esterase-4 (40 aa).

Belongs to the type-B carboxylesterase/lipase family.

The enzyme catalyses a carboxylic ester + H2O = an alcohol + a carboxylate + H(+). The chain is Esterase-4 (Est-4) from Drosophila mojavensis (Fruit fly).